The sequence spans 500 residues: Glutamate decarboxylase (500 aa).

Residue Lys-277 is modified to N6-(pyridoxal phosphate)lysine. Positions 469-500 are calmodulin-binding; that stretch reads VHKKTDSEVQLEMITAWKKFVEEKKKKTNRVC.

This sequence belongs to the group II decarboxylase family. In terms of assembly, homodimer. The cofactor is pyridoxal 5'-phosphate.

It carries out the reaction L-glutamate + H(+) = 4-aminobutanoate + CO2. Its function is as follows. Catalyzes the production of GABA. The calmodulin-binding is calcium-dependent and it is proposed that this may, directly or indirectly, form a calcium regulated control of GABA biosynthesis. The sequence is that of Glutamate decarboxylase (GAD) from Petunia hybrida (Petunia).